We begin with the raw amino-acid sequence, 212 residues long: Large ribosomal subunit protein uL3 (212 aa).

Gln154 is modified (N5-methylglutamine).

Belongs to the universal ribosomal protein uL3 family. As to quaternary structure, part of the 50S ribosomal subunit. Forms a cluster with proteins L14 and L19. In terms of processing, methylated by PrmB.

One of the primary rRNA binding proteins, it binds directly near the 3'-end of the 23S rRNA, where it nucleates assembly of the 50S subunit. This Hydrogenovibrio crunogenus (strain DSM 25203 / XCL-2) (Thiomicrospira crunogena) protein is Large ribosomal subunit protein uL3.